Reading from the N-terminus, the 100-residue chain is Small ribosomal subunit protein uS14c (100 aa).

Belongs to the universal ribosomal protein uS14 family. Part of the 30S ribosomal subunit.

It localises to the plastid. The protein resides in the chloroplast. Its function is as follows. Binds 16S rRNA, required for the assembly of 30S particles. The chain is Small ribosomal subunit protein uS14c from Glycine max (Soybean).